We begin with the raw amino-acid sequence, 456 residues long: Two pore potassium channel c (456 aa).

Positions 1 to 19 (MDTEPLLSPLSPSPHLLHP) are enriched in low complexity. The interval 1-112 (MDTEPLLSPL…PPSLFDFIGG (112 aa)) is disordered. Over 1-152 (MDTEPLLSPL…RNPPPPPRRP (152 aa)) the chain is Cytoplasmic. The segment covering 52-67 (HPPPPPPPPPPPPPPP) has biased composition (pro residues). The chain crosses the membrane as a helical span at residues 153–173 (AIVLHAFLFLLAYLAMGVTFY). An intramembrane region (pore-forming) is located at residues 192–211 (DALYFCIVTLCTIGYGDITP). A helical transmembrane segment spans residues 223–243 (FVLIGFGFVDILLSGMVSYVL). Topologically, residues 244-279 (DLQEHLLITALKNPRSVRKHRHNYIFDLKKGRMRVR) are cytoplasmic. The helical transmembrane segment at 280-300 (MKVALALTVVAICVGVGAAVL) threads the bilayer. The segment at residues 310–329 (DAVYLAVMSVTTVGYGDHAF) is an intramembrane region (pore-forming). A helical membrane pass occupies residues 336 to 356 (LFASAWLLVSTLAVARAFLYL). Over 357 to 456 (AEMRIDKRHR…LNEKKKGKKS (100 aa)) the chain is Cytoplasmic. EF-hand domains lie at 373–408 (LSRDMTVSEFLAADIDNNGYVTKSEFVVYKLKEMGK) and 412–447 (KDIMMICDQFQRMDSGNCGKITLSDLLESHQLVTDL). Ca(2+) contacts are provided by Asp-386, Asp-388, Asn-390, Tyr-392, Glu-397, Asp-425, Lys-431, and Asp-436.

This sequence belongs to the two pore domain potassium channel (TC 1.A.1.7) family. Homodimer.

Its subcellular location is the membrane. Its function is as follows. Inward-rectifying potassium channel. In Oryza sativa subsp. japonica (Rice), this protein is Two pore potassium channel c (TPKC).